The following is a 565-amino-acid chain: METTTKKARSLYIPYAGPVLLEFPLLNKGSAFSVEERRNFNLSGLLPEVVESIEEQAERAWLQYQGFKTEIDKHIYLRNIQDTNETLFYRLVQNHLEEMMPVIYTPTVGAACERFSEIYRRARGVFISYPNRHNMDDILQNVPNHNIKVIVVTDGERILGLGDQGIGGMGIPIGKLSLYTACGGISPAYTLPVVLDVGTNNQQLLNDPLYMGWRHPRITDDEYYAFVDEFIQAVKQRWPDILLQFEDFAQKNAMPLLTRYRDEICSFNDDIQGTAAVTVGTLIAASRAAGSQLSEQKIVFLGAGSAGCGIAEQIIAQTQREGLSEDAARQKVFMVDRFGLLTDRMPNLLSFQTKLVQKCDNLQHWDTENDVLSLLDVVRNVKPDILIGVSGQTGLFTEEIIREMHKHCPRPIVMPLSNPTSRVEATPQDIIAWTEGNALVATGSPFSPVIWKDKVYPIAQCNNAYIFPGIGLGVIASGASRITDEMLMSASETLAKHSPLVNNGEGLVLPALKDIQVVSRAIAFAVGKMAQQQGVAVKTSAEALQQAIDDNFWKPEYRDYRRTSI.

The active-site Proton donor is tyrosine 104. Residue arginine 157 coordinates NAD(+). Lysine 175 acts as the Proton acceptor in catalysis. A divalent metal cation-binding residues include glutamate 246, aspartate 247, and aspartate 270. The NAD(+) site is built by aspartate 270 and asparagine 418.

This sequence belongs to the malic enzymes family. As to quaternary structure, homotetramer. The cofactor is Mg(2+). Mn(2+) is required as a cofactor.

The catalysed reaction is (S)-malate + NAD(+) = pyruvate + CO2 + NADH. It catalyses the reaction oxaloacetate + H(+) = pyruvate + CO2. This is NAD-dependent malic enzyme from Salmonella arizonae (strain ATCC BAA-731 / CDC346-86 / RSK2980).